A 367-amino-acid chain; its full sequence is Anhydro-N-acetylmuramic acid kinase (367 aa).

13–20 provides a ligand contact to ATP; that stretch reads GTSMDGAD.

Belongs to the anhydro-N-acetylmuramic acid kinase family.

It carries out the reaction 1,6-anhydro-N-acetyl-beta-muramate + ATP + H2O = N-acetyl-D-muramate 6-phosphate + ADP + H(+). Its pathway is amino-sugar metabolism; 1,6-anhydro-N-acetylmuramate degradation. The protein operates within cell wall biogenesis; peptidoglycan recycling. In terms of biological role, catalyzes the specific phosphorylation of 1,6-anhydro-N-acetylmuramic acid (anhMurNAc) with the simultaneous cleavage of the 1,6-anhydro ring, generating MurNAc-6-P. Is required for the utilization of anhMurNAc either imported from the medium or derived from its own cell wall murein, and thus plays a role in cell wall recycling. The protein is Anhydro-N-acetylmuramic acid kinase of Neisseria meningitidis serogroup A / serotype 4A (strain DSM 15465 / Z2491).